A 354-amino-acid chain; its full sequence is Homer protein homolog 1 (354 aa).

Residues Met-1–Ala-110 enclose the WH1 domain. Position 2 is an N-acetylglycine (Gly-2). The tract at residues Lys-114–Phe-173 is disordered. 2 stretches are compositionally biased toward polar residues: residues Ser-138–Gly-147 and Asp-155–Phe-173. Positions Lys-181–Glu-352 form a coiled coil. The interval Lys-290–Ser-354 is required for tetramerization. Ser-306 bears the Phosphoserine mark.

This sequence belongs to the Homer family. As to quaternary structure, tetramer; this tetrameric structure is critical for forming the high-order complex with SHANK1, which in turn is necessary for the structural and functional integrity of dendritic spines. Interacts with GRM1, GRM5, ITPR1, DNM3, RYR1, RYR2 and SHANK3. Interacts with IFT57 and OPHN1. Isoform 1 encodes a coiled-coil structure that mediates homo- and heteromultimerization. Interacts with SHANK1; forms high-order polymerized complex with a mesh-like network structure, at least composed of SHANK1, HOMER1 and DLGAP1; the complex formation is SHANK1 multimerization dependent. Interacts with NFATC4. Interacts with DAGLA (via PPXXF motif); this interaction is required for the cell membrane localization of DAGLA. Interacts with SRGAP2.

It is found in the cytoplasm. It localises to the postsynaptic density. The protein resides in the synapse. Its subcellular location is the cell projection. The protein localises to the dendritic spine. Functionally, postsynaptic density scaffolding protein. Binds and cross-links cytoplasmic regions of GRM1, GRM5, ITPR1, DNM3, RYR1, RYR2, SHANK1 and SHANK3. By physically linking GRM1 and GRM5 with ER-associated ITPR1 receptors, it aids the coupling of surface receptors to intracellular calcium release. May also couple GRM1 to PI3 kinase through its interaction with AGAP2. Isoform 1 regulates the trafficking and surface expression of GRM5. Isoform 3 acts as a natural dominant negative, in dynamic competition with constitutively expressed isoform 1 to regulate synaptic metabotropic glutamate function. Isoform 3, may be involved in the structural changes that occur at synapses during long-lasting neuronal plasticity and development. Forms a high-order complex with SHANK1, which in turn is necessary for the structural and functional integrity of dendritic spines. Negatively regulates T cell activation by inhibiting the calcineurin-NFAT pathway. Acts by competing with calcineurin/PPP3CA for NFAT protein binding, hence preventing NFAT activation by PPP3CA. The polypeptide is Homer protein homolog 1 (Homo sapiens (Human)).